A 493-amino-acid chain; its full sequence is Alpha-amylase-related protein (493 aa).

A signal peptide spans Met1–Ala19. At Gln20 the chain carries Pyrrolidone carboxylic acid. Residues Cys47 and Cys103 are joined by a disulfide bond. Residues Asn117, Gln168, and Asp177 each coordinate Ca(2+). Cys156 and Cys170 form a disulfide bridge. Arg205 serves as a coordination point for chloride. Asp207 functions as the Nucleophile in the catalytic mechanism. His211 contributes to the Ca(2+) binding site. Glu244 serves as the catalytic Proton donor. Chloride is bound by residues Asn307 and Arg342. 3 cysteine pairs are disulfide-bonded: Cys375–Cys381, Cys417–Cys440, and Cys447–Cys459.

It belongs to the glycosyl hydrolase 13 family. In terms of assembly, monomer. Requires Ca(2+) as cofactor. The cofactor is chloride.

The protein resides in the secreted. The catalysed reaction is Endohydrolysis of (1-&gt;4)-alpha-D-glucosidic linkages in polysaccharides containing three or more (1-&gt;4)-alpha-linked D-glucose units.. The sequence is that of Alpha-amylase-related protein (Amyrel) from Drosophila teissieri (Fruit fly).